A 550-amino-acid chain; its full sequence is Coiled-coil domain-containing protein 102A (550 aa).

Disordered stretches follow at residues 1–69 (MSHG…DGDW) and 138–247 (GARR…ATEE). A phosphoserine mark is found at Ser12, Ser26, and Ser28. Residues 37 to 61 (SLPPTPPSGTPSPGPPPALPLPPAP) are compositionally biased toward pro residues. The stretch at 72 to 161 (REELRLRELE…ARGRELARLR (90 aa)) forms a coiled coil. 2 stretches are compositionally biased toward basic and acidic residues: residues 138 to 159 (GARR…ELAR) and 169 to 188 (QTRD…DVGS). 2 coiled-coil regions span residues 263–396 (QKVL…RRQT) and 427–518 (KLKK…NAPL). Disordered stretches follow at residues 472 to 497 (DELD…QSEN) and 509 to 550 (LRRQ…IQVA). The segment covering 530-550 (EEAEDGTSDLDEDEDLQIQVA) has biased composition (acidic residues). Ser537 carries the phosphoserine modification.

The protein is Coiled-coil domain-containing protein 102A (CCDC102A) of Homo sapiens (Human).